We begin with the raw amino-acid sequence, 1214 residues long: Neuronal cell adhesion molecule (1214 aa).

A signal peptide spans 1–29 (MQLKTMPKKKPLSAGRAPLFLFLCQMISA). Residues 30-1077 (LDVPLDPKLL…ASRQVDIATQ (1048 aa)) are Extracellular-facing. Ig-like C2-type domains follow at residues 46–134 (PTIT…AAVS) and 141–235 (PSRS…QPIS). 2 cysteine pairs are disulfide-bonded: cysteine 68-cysteine 123 and cysteine 167-cysteine 218. An N-linked (GlcNAc...) asparagine glycan is attached at asparagine 83. 6 N-linked (GlcNAc...) asparagine glycosylation sites follow: asparagine 223, asparagine 245, asparagine 251, asparagine 276, asparagine 314, and asparagine 377. 4 consecutive Ig-like C2-type domains span residues 267–356 (PPTF…ISVT), 361–448 (PYWI…AFVN), 454–541 (PRIL…VHLE), and 545–626 (PTRF…DSVS). A disulfide bond links cysteine 292 and cysteine 340. Cysteine 382 and cysteine 432 are joined by a disulfide. Residues asparagine 433 and asparagine 507 are each glycosylated (N-linked (GlcNAc...) asparagine). 2 disulfide bridges follow: cysteine 476-cysteine 525 and cysteine 567-cysteine 616. Residues asparagine 619, asparagine 716, asparagine 802, asparagine 858, asparagine 993, asparagine 1009, and asparagine 1019 are each glycosylated (N-linked (GlcNAc...) asparagine). Fibronectin type-III domains follow at residues 649–744 (PPFD…TKAA), 746–843 (PDQN…SGED), 848–950 (APGN…TPEG), and 954–1051 (APSS…VDEG). The helical transmembrane segment at 1078-1100 (GWFIGLMCAVALLILILLIVCFI) threads the bilayer. The Cytoplasmic portion of the chain corresponds to 1101–1214 (RRNKGGKYPV…SPVNAMNSFV (114 aa)). Residues 1109–1129 (PVKEKEDAHADPEIQPMKEDD) show a composition bias toward basic and acidic residues. The disordered stretch occupies residues 1109–1214 (PVKEKEDAHA…SPVNAMNSFV (106 aa)). Threonine 1131 carries the phosphothreonine modification. Tyrosine 1135 carries the phosphotyrosine modification. Serine 1136 bears the Phosphoserine mark. The span at 1151–1160 (PSDRTVKKED) shows a compositional bias: basic and acidic residues. Phosphoserine is present on residues serine 1161, serine 1164, serine 1181, serine 1200, serine 1201, and serine 1205. The span at 1198–1214 (NESSEAPSPVNAMNSFV) shows a compositional bias: polar residues.

This sequence belongs to the immunoglobulin superfamily. L1/neurofascin/NgCAM family. Constituent of a NFASC/NRCAM/ankyrin-G complex. Detected in a complex with CNTN1 and PTPRB. Interacts with MYOC. Interacts with GLDN. As to expression, detected in cerebellum Purkinje cells. Detected on nodes of Ranvier and unmyelinated axons in sciatic nerve (at protein level).

The protein resides in the cell membrane. It localises to the cell projection. It is found in the axon. Its subcellular location is the secreted. Its function is as follows. Cell adhesion protein that is required for normal responses to cell-cell contacts in brain and in the peripheral nervous system. Plays a role in neurite outgrowth in response to contactin binding. Plays a role in mediating cell-cell contacts between Schwann cells and axons. Plays a role in the formation and maintenance of the nodes of Ranvier on myelinated axons. Nodes of Ranvier contain clustered sodium channels that are crucial for the saltatory propagation of action potentials along myelinated axons. During development, nodes of Ranvier are formed by the fusion of two heminodes. Required for normal clustering of sodium channels at heminodes; not required for the formation of mature nodes with normal sodium channel clusters. Required, together with GLDN, for maintaining NFASC and sodium channel clusters at mature nodes of Ranvier. The protein is Neuronal cell adhesion molecule (Nrcam) of Rattus norvegicus (Rat).